The sequence spans 315 residues: Type II methyltransferase M.Bsp6I (315 aa).

Residues 2–315 (LQIASLFAGV…IAENIYKSML (314 aa)) form the SAM-dependent MTase C5-type domain. Cys-73 is a catalytic residue.

Belongs to the class I-like SAM-binding methyltransferase superfamily. C5-methyltransferase family.

It catalyses the reaction a 2'-deoxycytidine in DNA + S-adenosyl-L-methionine = a 5-methyl-2'-deoxycytidine in DNA + S-adenosyl-L-homocysteine + H(+). A methylase that recognizes the double-stranded sequence 5'-GCNGC-3', methylates C-? on both strands, and protects the DNA from cleavage by the Bsp6I endonuclease. The chain is Type II methyltransferase M.Bsp6I from Bacillus sp. (strain RFL6).